We begin with the raw amino-acid sequence, 623 residues long: Membralin-like protein At1g60995 (623 aa).

Residues 24–44 (GFLEYTYLFVAITLFCILVVM) traverse the membrane as a helical segment. The interval 99–119 (SLEVSKTDQESSTSEENTDDT) is disordered. 4 consecutive transmembrane segments (helical) span residues 315–335 (GVLMMSLFVFFTTTMSVSFTL), 363–383 (IFVHVIESLVFVPIMIGILFF), 392–412 (LLAFMVLVLVWLCELFTLISV), and 424–444 (FFLLYFLVFHIYFFSYAYGFS). 2 disordered regions span residues 506 to 567 (NRTT…QAGA) and 602 to 623 (EAQVFADTSPPQNPHHDPLSVD). Positions 514 to 531 (PSGPNHTTPNQNTETRSF) are enriched in polar residues.

The protein belongs to the membralin family.

It is found in the membrane. The polypeptide is Membralin-like protein At1g60995 (Arabidopsis thaliana (Mouse-ear cress)).